Here is a 482-residue protein sequence, read N- to C-terminus: Membrane-bound lytic murein transglycosylase F (482 aa).

The N-terminal stretch at 1–18 is a signal peptide; it reads MKGLFIRIVLAICLSLWA. Positions 19 to 266 are non-LT domain; it reads IDMVFPWQQI…RIEEKYFNHL (248 aa). The interval 267–482 is LT domain; sequence NQFDYVDTRS…ISTQTQQEQR (216 aa). Glu311 is an active-site residue.

The protein in the N-terminal section; belongs to the bacterial solute-binding protein 3 family. It in the C-terminal section; belongs to the transglycosylase Slt family.

It is found in the cell outer membrane. The enzyme catalyses Exolytic cleavage of the (1-&gt;4)-beta-glycosidic linkage between N-acetylmuramic acid (MurNAc) and N-acetylglucosamine (GlcNAc) residues in peptidoglycan, from either the reducing or the non-reducing ends of the peptidoglycan chains, with concomitant formation of a 1,6-anhydrobond in the MurNAc residue.. In terms of biological role, murein-degrading enzyme that degrades murein glycan strands and insoluble, high-molecular weight murein sacculi, with the concomitant formation of a 1,6-anhydromuramoyl product. Lytic transglycosylases (LTs) play an integral role in the metabolism of the peptidoglycan (PG) sacculus. Their lytic action creates space within the PG sacculus to allow for its expansion as well as for the insertion of various structures such as secretion systems and flagella. This chain is Membrane-bound lytic murein transglycosylase F, found in Histophilus somni (strain 129Pt) (Haemophilus somnus).